We begin with the raw amino-acid sequence, 431 residues long: Serine--tRNA ligase (431 aa).

235-237 (TSE) contacts L-serine. 266–268 (RSE) provides a ligand contact to ATP. Residue E289 coordinates L-serine. 353 to 356 (EISS) lines the ATP pocket. S388 lines the L-serine pocket.

It belongs to the class-II aminoacyl-tRNA synthetase family. Type-1 seryl-tRNA synthetase subfamily. Homodimer. The tRNA molecule binds across the dimer.

Its subcellular location is the cytoplasm. It carries out the reaction tRNA(Ser) + L-serine + ATP = L-seryl-tRNA(Ser) + AMP + diphosphate + H(+). The enzyme catalyses tRNA(Sec) + L-serine + ATP = L-seryl-tRNA(Sec) + AMP + diphosphate + H(+). It participates in aminoacyl-tRNA biosynthesis; selenocysteinyl-tRNA(Sec) biosynthesis; L-seryl-tRNA(Sec) from L-serine and tRNA(Sec): step 1/1. Its function is as follows. Catalyzes the attachment of serine to tRNA(Ser). Is also able to aminoacylate tRNA(Sec) with serine, to form the misacylated tRNA L-seryl-tRNA(Sec), which will be further converted into selenocysteinyl-tRNA(Sec). The chain is Serine--tRNA ligase from Paraburkholderia phytofirmans (strain DSM 17436 / LMG 22146 / PsJN) (Burkholderia phytofirmans).